Reading from the N-terminus, the 375-residue chain is ATP-sensitive inward rectifier potassium channel 15 (375 aa).

At 1–60 the chain is on the cytoplasmic side; sequence MDAIHLGMSSAPLVKHTNGVGLKAHRPRVMSKSGHSNVRIDKVDGIYLLYLQDLWTTVID. A helical transmembrane segment spans residues 61 to 87; that stretch reads MKWRYKLTLFAATFVMTWFLFGVVYYA. Over 88-113 the chain is Extracellular; that stretch reads IAFIHGDLQLGESNSNHTPCIMKVDS. Positions 114–130 form an intramembrane region, helical; Pore-forming; sequence LTGAFLFSLESQTTIGY. Positions 127–132 match the Selectivity filter motif; the sequence is TIGYGV. Residues 131 to 139 lie on the Extracellular side of the membrane; sequence GVRSITEEC. Residues 140-165 form a helical membrane-spanning segment; sequence PHAIFLLVAQLVITTLIEIFITGTFL. Over 166–375 the chain is Cytoplasmic; sequence AKIARPKKRA…RSLLLQQSNV (210 aa).

Belongs to the inward rectifier-type potassium channel (TC 1.A.2.1) family. KCNJ15 subfamily. In terms of assembly, can form heteromultimeric channels with Kir5.1/KCNJ16. Interacts with PATJ. Expressed in the proximal segment of the nephron.

It is found in the membrane. The protein resides in the cell membrane. The catalysed reaction is K(+)(in) = K(+)(out). Channel activity is regulated by variations of cytosolic pH; reversibly inhibited by acidic pH values. Inhibited by Ba(2+) and Cs(+) in a voltage-dependent manner. Inward rectifier potassium channels are characterized by a greater tendency to allow potassium to flow into the cell rather than out of it. Their voltage dependence is regulated by the concentration of extracellular potassium; as external potassium is raised, the voltage range of the channel opening shifts to more positive voltages. The inward rectification is mainly due to the blockage of outward current by internal magnesium. The sequence is that of ATP-sensitive inward rectifier potassium channel 15 (Kcnj15) from Mus musculus (Mouse).